Reading from the N-terminus, the 399-residue chain is Succinate--CoA ligase [ADP-forming] subunit beta (399 aa).

Residues 9–254 (KAVLKSFGAP…TTEEDEKEIE (246 aa)) enclose the ATP-grasp domain. Residues Lys46, 53–55 (GRG), Glu109, Ala112, and Glu117 contribute to the ATP site. 2 residues coordinate Mg(2+): Asn209 and Asp223. Substrate-binding positions include Asn274 and 331–333 (GIM).

It belongs to the succinate/malate CoA ligase beta subunit family. As to quaternary structure, heterotetramer of two alpha and two beta subunits. It depends on Mg(2+) as a cofactor.

The enzyme catalyses succinate + ATP + CoA = succinyl-CoA + ADP + phosphate. It catalyses the reaction GTP + succinate + CoA = succinyl-CoA + GDP + phosphate. The protein operates within carbohydrate metabolism; tricarboxylic acid cycle; succinate from succinyl-CoA (ligase route): step 1/1. Succinyl-CoA synthetase functions in the citric acid cycle (TCA), coupling the hydrolysis of succinyl-CoA to the synthesis of either ATP or GTP and thus represents the only step of substrate-level phosphorylation in the TCA. The beta subunit provides nucleotide specificity of the enzyme and binds the substrate succinate, while the binding sites for coenzyme A and phosphate are found in the alpha subunit. This is Succinate--CoA ligase [ADP-forming] subunit beta from Maricaulis maris (strain MCS10) (Caulobacter maris).